The chain runs to 426 residues: D-tagatose-1,6-bisphosphate aldolase subunit KbaZ (426 aa).

It belongs to the GatZ/KbaZ family. KbaZ subfamily. Forms a complex with KbaY.

It functions in the pathway carbohydrate metabolism; D-tagatose 6-phosphate degradation; D-glyceraldehyde 3-phosphate and glycerone phosphate from D-tagatose 6-phosphate: step 2/2. In terms of biological role, component of the tagatose-1,6-bisphosphate aldolase KbaYZ that is required for full activity and stability of the Y subunit. Could have a chaperone-like function for the proper and stable folding of KbaY. When expressed alone, KbaZ does not show any aldolase activity. This chain is D-tagatose-1,6-bisphosphate aldolase subunit KbaZ, found in Escherichia coli (strain K12 / MC4100 / BW2952).